We begin with the raw amino-acid sequence, 393 residues long: N-lysine methyltransferase KMT5A (393 aa).

The segment at 68–88 (PGPEMVERRGPGRPRTDGENV) is disordered. Residues 72–85 (MVERRGPGRPRTDG) are compositionally biased toward basic and acidic residues. Position 100 is a phosphoserine (Ser-100). Residues 134–163 (RKREEKRNAGNAVRSAMKSEEQKIKDARKG) are a coiled coil. A disordered region spans residues 135 to 241 (KREEKRNAGN…SRKSKAELQS (107 aa)). Residues 150–162 (MKSEEQKIKDARK) are compositionally biased toward basic and acidic residues. Lys-162 bears the N6-acetyllysine mark. Thr-181 carries the post-translational modification Phosphothreonine. Residues 197-213 (ALKKPIKGKQAPRKKAQ) show a composition bias toward basic residues. In terms of domain architecture, SET spans 257-378 (EGMKIDLIDG…AGEELLYDYG (122 aa)). S-adenosyl-L-methionine-binding positions include 267–269 (KGR), Tyr-312, and 339–340 (NH).

The protein belongs to the class V-like SAM-binding methyltransferase superfamily. Histone-lysine methyltransferase family. PR/SET subfamily. In terms of assembly, interacts with L3MBTL1. As to quaternary structure, interacts with SIRT2 (phosphorylated form); the interaction is direct, stimulates KMT5A-mediated methyltransferase activity at histone H4 'Lys-20' (H4K20me1) and is increased in a H(2)O(2)-induced oxidative stress-dependent manner. In terms of processing, acetylated at Lys-162; does not affect methyltransferase activity. Deacetylated at Lys-162 possibly by SIRT2; does not change methyltransferase activity. Ubiquitinated and degraded by the DCX(DTL) complex.

Its subcellular location is the nucleus. It is found in the chromosome. The catalysed reaction is L-lysyl(20)-[histone H4] + S-adenosyl-L-methionine = N(6)-methyl-L-lysyl(20)-[histone H4] + S-adenosyl-L-homocysteine + H(+). It carries out the reaction L-lysyl-[protein] + S-adenosyl-L-methionine = N(6)-methyl-L-lysyl-[protein] + S-adenosyl-L-homocysteine + H(+). Functionally, protein-lysine N-methyltransferase that monomethylates both histones and non-histone proteins. Specifically monomethylates 'Lys-20' of histone H4 (H4K20me1). H4K20me1 is enriched during mitosis and represents a specific tag for epigenetic transcriptional repression. Mainly functions in euchromatin regions, thereby playing a central role in the silencing of euchromatic genes. Required for cell proliferation, probably by contributing to the maintenance of proper higher-order structure of DNA during mitosis. Involved in chromosome condensation and proper cytokinesis. Nucleosomes are preferred as substrate compared to free histones. Mediates monomethylation of p53/TP53 at 'Lys-382', leading to repress p53/TP53-target genes. Plays a negative role in TGF-beta response regulation and a positive role in cell migration. The chain is N-lysine methyltransferase KMT5A from Homo sapiens (Human).